A 241-amino-acid chain; its full sequence is Chloride intracellular channel protein 1 (241 aa).

Residue Ala-2 is modified to N-acetylalanine. The interval 2 to 90 (AEEQPQVELF…EEFLEAVLCP (89 aa)) is required for insertion into the membrane. Lys-13 carries the post-translational modification N6-acetyllysine. Residues 24-27 (CPFS) carry the G-site motif. A disulfide bond links Cys-24 and Cys-59. A helical membrane pass occupies residues 26 to 46 (FSQRLFMVLWLKGVTFNVTTV). The GST C-terminal domain occupies 93–233 (YPKLAALNPE…PDDEEIELAY (141 aa)). Position 119 is an N6-acetyllysine (Lys-119). Ser-121 is modified (phosphoserine). Lys-131 is modified (N6-acetyllysine). 2 positions are modified to phosphoserine: Ser-156 and Ser-211. A Phosphotyrosine modification is found at Tyr-233.

Belongs to the chloride channel CLIC family. Monomer. Homodimer (in vitro). Interacts with TRAPPC2. Dimerization requires a conformation change that leads to the exposure of a large hydrophobic surface. In vivo, this may lead to membrane insertion. Expressed in neonatal and adult cardiomyocytes (at protein level).

It is found in the nucleus. Its subcellular location is the nucleus membrane. The protein resides in the cytoplasm. The protein localises to the cell membrane. It localises to the endoplasmic reticulum. The enzyme catalyses L-dehydroascorbate + 2 glutathione = glutathione disulfide + L-ascorbate. The catalysed reaction is chloride(in) = chloride(out). It carries out the reaction iodide(out) = iodide(in). It catalyses the reaction thiocyanate(in) = thiocyanate(out). The enzyme catalyses nitrate(in) = nitrate(out). The catalysed reaction is bromide(in) = bromide(out). It carries out the reaction fluoride(in) = fluoride(out). In terms of biological role, in the soluble state, catalyzes glutaredoxin-like thiol disulfide exchange reactions with reduced glutathione as electron donor. Reduces selenite and dehydroascorbate and may act as an antioxidant during oxidative stress response. Can insert into membranes and form voltage-dependent multi-ion conductive channels. Membrane insertion seems to be redox-regulated and may occur only under oxidizing conditions. Involved in regulation of the cell cycle. The chain is Chloride intracellular channel protein 1 from Rattus norvegicus (Rat).